Consider the following 357-residue polypeptide: MNTITVYRLGRVEYEDGLALMHLFSESRRQGLSGDVLLLLEHPPILTLGRAAKRENIVASDAQLAKEGAEVFETNRGGDVTYHGPGQLVGYPIFLLPEDRRDVRRYVRDVERSVMQVLAQWGITAGPIPKWPGVWIGAEGAPDARKIAAIGVHLSRWLTTHGFALNVNTNLDHFQLIVPCGIREAGVTSMQRELGRALPMAEVEEAIANSFCTVFDSERVDAPPPMRTVSIAVVKGRGPEARVLLVRRRPERGGFWQVLTGRLEAGESPAQAAARELEEETGLRVPLVDLDYRHAFALGEALPPQLVEENGFAVHVPPDADVRLGAEHDAFEWVDVPTALERLPFQGLRETVKRATA.

Residues 1–222 are lipB domain; the sequence is MNTITVYRLG…TVFDSERVDA (222 aa). The BPL/LPL catalytic domain maps to 31-219; that stretch reads GLSGDVLLLL…SFCTVFDSER (189 aa). Substrate contacts are provided by residues 76–83, 149–151, and 162–164; these read RGGDVTYH, AIG, and GFA. Cys180 (acyl-thioester intermediate) is an active-site residue. One can recognise a Nudix hydrolase domain in the interval 224–356; it reads PPMRTVSIAV…GLRETVKRAT (133 aa). The Nudix box motif lies at 261-282; that stretch reads GRLEAGESPAQAAARELEEETG.

The protein in the N-terminal section; belongs to the LipB family.

The protein resides in the cytoplasm. The enzyme catalyses octanoyl-[ACP] + L-lysyl-[protein] = N(6)-octanoyl-L-lysyl-[protein] + holo-[ACP] + H(+). The protein operates within protein modification; protein lipoylation via endogenous pathway; protein N(6)-(lipoyl)lysine from octanoyl-[acyl-carrier-protein]: step 1/2. Functionally, catalyzes the transfer of endogenously produced octanoic acid from octanoyl-acyl-carrier-protein onto the lipoyl domains of lipoate-dependent enzymes. Lipoyl-ACP can also act as a substrate although octanoyl-ACP is likely to be the physiological substrate. The polypeptide is Octanoyltransferase (lipB) (Myxococcus xanthus).